The primary structure comprises 418 residues: MQHKRSRAMASPRSPFLFVLLALAVGGTANAHDDGLPAFRYSAELLGQLQLPSVALPLNDDLFLYGRDAEAFDLEAYLALNAPALRDKSEYLEHWSGYYSINPKVLLTLMVMQSGPLGAPDERALAAPLGRLSAKRGFDAQVRDVLQQLSRRYYGFEEYQLRQAAARKAVGEDGLNAASAALLGLLREGAKVSAVQGGNPLGAYAQTFQRLFGTPAAELLQPSNRVARQLQAKAALAPPSNLMQLPWRQGYSWQPNGAHSNTGSGYPYSSFDASYDWPRWGSATYSVVAAHAGTVRVLSRCQVRVTHPSGWATNYYHMDQIQVSNGQQVSADTKLGVYAGNINTALCEGGSSTGPHLHFSLLYNGAFVSLQGASFGPYRINVGTSNYDNDCRRYYFYNQSAGTTHCAFRPLYNPGLAL.

The N-terminal stretch at 1–31 (MQHKRSRAMASPRSPFLFVLLALAVGGTANA) is a signal peptide. A propeptide spanning residues 32–236 (HDDGLPAFRY…ARQLQAKAAL (205 aa)) is cleaved from the precursor. Residues H259 and D272 each contribute to the Zn(2+) site. A disulfide bridge connects residues C301 and C347. Active-site proton donor/acceptor residues include H317 and H356. Residue H358 coordinates Zn(2+). A disulfide bond links C391 and C406.

This sequence belongs to the peptidase M23A family. The cofactor is Zn(2+). Processing of pro-LasA can occur extracellularly and requires elastase (lasB). Secretion and processing may be linked.

It is found in the secreted. Its function is as follows. Involved in proteolysis and elastolysis (degradation of the host protein elastin). Has staphylolytic activity (degrades pentaglycine cross-links in cell wall peptidoglycan), preferring Gly-Gly-|-X substrates where X is Ala or Gly. Enhances the elastolytic but not proteolytic activity of elastase (lasB) and elastolytic activity of other proteases. Degradation of host elastin is likely to contribute to the pathogenicity of P.aeruginosa. While either His-317 or His-356 can abstract a proton in the hydrolysis reaction, the same residue performs both functions in a given catalytic cycle, with the other stabilizing the catalytic intermediate. This Pseudomonas aeruginosa (strain ATCC 15692 / DSM 22644 / CIP 104116 / JCM 14847 / LMG 12228 / 1C / PRS 101 / PAO1) protein is Protease LasA (lasA).